A 271-amino-acid polypeptide reads, in one-letter code: MEFWQHIYSNFNVIAFSIFGLKVHWYGIMYVIALLLALLLAKFFVRKFQLDINEKHLDSYFIWVEIGVILGARLGYILIYDANTMYYITHPWQIFNPYINGEFVGIRGMSYHGAIIGFLIATLLFCKKYKANPWIFLDLVALSVPLAYVFGRIGNFLNQELFGRITNVPWGIYVDGVLRHPSQLYEAFLEGIVVFIIVYLARFKQSFQGELILVYAGAYSLARFICEFYREPDFGIGFVLWGMSMGQILSFIMFITALLVYICIKFKKVNI.

4 helical membrane-spanning segments follow: residues 25-45 (WYGIMYVIALLLALLLAKFFV), 60-80 (YFIWVEIGVILGARLGYILIY), 103-123 (FVGIRGMSYHGAIIGFLIATL), and 131-151 (ANPWIFLDLVALSVPLAYVFG). Position 152 (Arg-152) interacts with a 1,2-diacyl-sn-glycero-3-phospho-(1'-sn-glycerol). Transmembrane regions (helical) follow at residues 181–201 (PSQLYEAFLEGIVVFIIVYLA), 209–229 (GELILVYAGAYSLARFICEFY), and 235–255 (GIGFVLWGMSMGQILSFIMFI).

It belongs to the Lgt family.

It localises to the cell inner membrane. The catalysed reaction is L-cysteinyl-[prolipoprotein] + a 1,2-diacyl-sn-glycero-3-phospho-(1'-sn-glycerol) = an S-1,2-diacyl-sn-glyceryl-L-cysteinyl-[prolipoprotein] + sn-glycerol 1-phosphate + H(+). It participates in protein modification; lipoprotein biosynthesis (diacylglyceryl transfer). In terms of biological role, catalyzes the transfer of the diacylglyceryl group from phosphatidylglycerol to the sulfhydryl group of the N-terminal cysteine of a prolipoprotein, the first step in the formation of mature lipoproteins. This Campylobacter jejuni (strain RM1221) protein is Phosphatidylglycerol--prolipoprotein diacylglyceryl transferase.